We begin with the raw amino-acid sequence, 520 residues long: Type I restriction enzyme EcoprrI methylase subunit (520 aa).

S-adenosyl-L-methionine is bound by residues 198 to 203, 230 to 232, and E254; these read EFFTPQ and SGS.

The protein belongs to the N(4)/N(6)-methyltransferase family. As to quaternary structure, the type I restriction/modification system is composed of three polypeptides R, M and S; the restriction enzyme has stoichiometry R(2)M(2)S(1) while the methyltransferase is M(2)S(1).

The catalysed reaction is a 2'-deoxyadenosine in DNA + S-adenosyl-L-methionine = an N(6)-methyl-2'-deoxyadenosine in DNA + S-adenosyl-L-homocysteine + H(+). Its function is as follows. The subtype gamma methyltransferase (M) subunit of a type I restriction enzyme. The M and S subunits together form a methyltransferase (MTase) that methylates two adenine residues of the sequence 5'-CCAN(7)ATGC-3'. In the presence of the R subunit the complex can also act as an endonuclease, binding to the same target sequence but cutting the DNA some distance from this site. Whether the DNA is cut or modified depends on the methylation state of the target sequence. When the target site is unmodified, the DNA is cut. When the target site is hemimethylated, the complex acts as a maintenance MTase modifying the DNA so that both strands become methylated. After locating a non-methylated recognition site, the enzyme complex serves as a molecular motor that translocates DNA in an ATP-dependent manner until a collision occurs that triggers cleavage. This chain is Type I restriction enzyme EcoprrI methylase subunit, found in Escherichia coli.